Here is a 159-residue protein sequence, read N- to C-terminus: Ribosomal RNA large subunit methyltransferase H (159 aa).

S-adenosyl-L-methionine-binding positions include leucine 76, glycine 108, and 127–132 (FGRLTL).

The protein belongs to the RNA methyltransferase RlmH family. Homodimer.

It localises to the cytoplasm. It catalyses the reaction pseudouridine(1915) in 23S rRNA + S-adenosyl-L-methionine = N(3)-methylpseudouridine(1915) in 23S rRNA + S-adenosyl-L-homocysteine + H(+). Its function is as follows. Specifically methylates the pseudouridine at position 1915 (m3Psi1915) in 23S rRNA. The chain is Ribosomal RNA large subunit methyltransferase H from Streptococcus uberis (strain ATCC BAA-854 / 0140J).